Reading from the N-terminus, the 260-residue chain is Large ribosomal subunit protein uL2 (260 aa).

A disordered region spans residues 1 to 24 (MGRVIRAQRKGAGSVFKSHTHHRK).

Belongs to the universal ribosomal protein uL2 family.

The protein localises to the cytoplasm. The sequence is that of Large ribosomal subunit protein uL2 (RPL8) from Solanum lycopersicum (Tomato).